A 790-amino-acid polypeptide reads, in one-letter code: Lon protease (790 aa).

Residues 13 to 209 (LPLFPIRNTV…RLTDHVAKEI (197 aa)) enclose the Lon N-terminal domain. Residue 362 to 369 (GPPGVGKT) participates in ATP binding. The Lon proteolytic domain occupies 598–779 (DNQVGITIGL…DQVLDIALAT (182 aa)). Residues Ser-685 and Lys-728 contribute to the active site.

Belongs to the peptidase S16 family. In terms of assembly, homohexamer. Organized in a ring with a central cavity.

It localises to the cytoplasm. It catalyses the reaction Hydrolysis of proteins in presence of ATP.. Its function is as follows. ATP-dependent serine protease that mediates the selective degradation of mutant and abnormal proteins as well as certain short-lived regulatory proteins. Required for cellular homeostasis and for survival from DNA damage and developmental changes induced by stress. Degrades polypeptides processively to yield small peptide fragments that are 5 to 10 amino acids long. Binds to DNA in a double-stranded, site-specific manner. This Orientia tsutsugamushi (strain Ikeda) (Rickettsia tsutsugamushi) protein is Lon protease.